Here is a 121-residue protein sequence, read N- to C-terminus: Large ribosomal subunit protein uL18 (121 aa).

It belongs to the universal ribosomal protein uL18 family. Part of the 50S ribosomal subunit; part of the 5S rRNA/L5/L18/L25 subcomplex. Contacts the 5S and 23S rRNAs.

Functionally, this is one of the proteins that bind and probably mediate the attachment of the 5S RNA into the large ribosomal subunit, where it forms part of the central protuberance. The polypeptide is Large ribosomal subunit protein uL18 (Desulfotalea psychrophila (strain LSv54 / DSM 12343)).